The following is a 207-amino-acid chain: LexA repressor (207 aa).

The H-T-H motif DNA-binding region spans 28 to 48; that stretch reads VREIGEAVGLASSSTVHGHLA. Residues Ser-129 and Lys-167 each act as for autocatalytic cleavage activity in the active site.

It belongs to the peptidase S24 family. Homodimer.

The catalysed reaction is Hydrolysis of Ala-|-Gly bond in repressor LexA.. In terms of biological role, represses a number of genes involved in the response to DNA damage (SOS response), including recA and lexA. In the presence of single-stranded DNA, RecA interacts with LexA causing an autocatalytic cleavage which disrupts the DNA-binding part of LexA, leading to derepression of the SOS regulon and eventually DNA repair. This chain is LexA repressor, found in Geobacillus kaustophilus (strain HTA426).